The chain runs to 819 residues: Plastid division protein CDP1, chloroplastic (819 aa).

The transit peptide at 1–76 directs the protein to the chloroplast; it reads MPVAYTFPVL…NAAGGGIHVV (76 aa). Topologically, residues 77–572 are stromal; sequence DNAPSRTSSL…NKIWDEWLSQ (496 aa). Residues 419–439 adopt a coiled-coil conformation; the sequence is EAEALEKLKQLESNSDSAVRN. Residues 573-593 form a helical membrane-spanning segment; that stretch reads SSLIGRVSVVALLGCTVFFSL. Residues 594 to 819 are Chloroplast intermembrane-facing; it reads KLSGIRSGRL…FCQSDIQIQK (226 aa). Positions 762–782 form a coiled coil; that stretch reads IAGEAAEIEALLEEAAELVDE.

Self-interacts. Interacts (via N-terminus) with ARC3 (via MORN domains). Binds (via N-terminus) to FTSZ2 proteins, FTSZ2-1 and FTSZ2-2. Recruited ARC3 to the middle of the plastid where subsequent complex made of CDP1/PARC6, ARC3 and FtsZ proteins can form; this complex enhances the dynamics of Z rings during chloroplast division. Interacts (via C-terminus) with PDV1 (via C-terminus). Interacts with MIND1. Exclusively expressed in young green tissues such as young cotyledons, shoot apex, emerging leaves and budding inflorescence.

It is found in the plastid. It localises to the chloroplast inner membrane. Functionally, component of the plastid division machinery required for PDV1 localization to constriction sites. Involved in chloroplast division site placement. Required for the proper formation of FtsZ rings at the division site in nongreen plastids (e.g. etioplasts). Inhibits FtsZ assembly, functioning as an antagonistic regulator of FtsZ dynamics against ARC6, by recruiting ARC3 to the middle of the plastid to facilitate its interaction with FtsZ proteins. Required during stromule biogenesis in the leaf epidermis, especially in non-mesophyll cells plastids. In Arabidopsis thaliana (Mouse-ear cress), this protein is Plastid division protein CDP1, chloroplastic.